The primary structure comprises 278 residues: Methyltransferase GfsG (278 aa).

S-adenosyl-L-methionine-binding positions include Gln-105 and 128 to 129 (DA). Catalysis depends on Glu-146, which acts as the Proton acceptor. An S-adenosyl-L-methionine-binding site is contributed by His-150.

The protein belongs to the methyltransferase superfamily.

The protein operates within antibiotic biosynthesis. Its function is as follows. Methylase required for synthesis of the 16-membered macrolide antibiotics FD-891 and FD-892. In vitro uses S-adenosyl-L-methionine to methylate a number of biosynthetic intermediates in the synthesis of FD-891. This is Methyltransferase GfsG from Streptomyces halstedii.